We begin with the raw amino-acid sequence, 192 residues long: MLVNFEGVDGVGKSTQISLLKEFRNDAVITKEPGGTEFGLMVRDYLLKNASKISNKTEIFLFLADRAEHYEKVLKPNYANLVLNDRSFVSGMAYAMANDSSLDIGLLLDLNKFALNSDLGDKFVFLKADEILLRNRLFSRGTSDEIEMRGIEYLMRVQGFMSIILSDLKFDVLEIDASLEVLEIQEKIRKFI.

An ATP-binding site is contributed by 7-14; the sequence is GVDGVGKS.

The protein belongs to the thymidylate kinase family.

The enzyme catalyses dTMP + ATP = dTDP + ADP. Phosphorylation of dTMP to form dTDP in both de novo and salvage pathways of dTTP synthesis. The polypeptide is Thymidylate kinase (Campylobacter fetus subsp. fetus (strain 82-40)).